The chain runs to 510 residues: Cytochrome P450 94B1 (510 aa).

Residues 3–23 (MLNAIILILFPIIGFVLIFSF) form a helical membrane-spanning segment. Position 450 (cysteine 450) interacts with heme.

It belongs to the cytochrome P450 family. Heme serves as cofactor.

The protein resides in the membrane. It carries out the reaction a jasmonyl-L-amino acid + reduced [NADPH--hemoprotein reductase] + O2 = a 12-hydroxyjasmonyl-L-alpha-amino acid + oxidized [NADPH--hemoprotein reductase] + H2O + H(+). In terms of biological role, hydroxylase involved in the oxidation of the plant hormone jasmonoyl-L-isoleucine (JA-Ile), a bioactive phytohormone of the jasmonate-mediated signaling pathway. Converts JA-Ile to 12-hydroxy-JA-Ile. This Arabidopsis thaliana (Mouse-ear cress) protein is Cytochrome P450 94B1.